The following is a 111-amino-acid chain: SPbeta prophage-derived uncharacterized protein YolC (111 aa).

The first 25 residues, 1–25 (MKKRLIGFLVLVPALIMSGITLIEA), serve as a signal peptide directing secretion.

The chain is SPbeta prophage-derived uncharacterized protein YolC (yolC) from Bacillus subtilis (strain 168).